Reading from the N-terminus, the 637-residue chain is Sodium-dependent nutrient amino acid transporter 1 (637 aa).

A compositionally biased stretch (polar residues) spans 1–17; the sequence is MELKTMPQNGANAGTQH. The disordered stretch occupies residues 1–39; the sequence is MELKTMPQNGANAGTQHNNNSNNKPDNNEKEAQKKEPER. The Cytoplasmic portion of the chain corresponds to 1-47; it reads MELKTMPQNGANAGTQHNNNSNNKPDNNEKEAQKKEPERTNWSNGLE. A compositionally biased stretch (basic and acidic residues) spans 26 to 39; sequence DNNEKEAQKKEPER. 3 consecutive transmembrane segments (helical) span residues 48-68, 75-95, and 128-148; these read FLMS…FPFT, GAFL…MYYL, and TICI…YLFV. N-linked (GlcNAc...) asparagine glycans are attached at residues Asn181 and Asn195. The next 9 helical transmembrane spans lie at 225 to 245, 254 to 274, 303 to 323, 337 to 357, 397 to 417, 443 to 463, 470 to 490, 515 to 535, and 549 to 569; these read PDWK…LVIM, AAYF…GRAV, AVVQ…MFAS, IVTT…FAIL, LFSA…IVAL, ICGF…ILTL, TYVV…IYGL, FFTP…ISPI, and AGWV…WWYI.

Belongs to the sodium:neurotransmitter symporter (SNF) (TC 2.A.22) family.

It is found in the membrane. Functionally, unusual broad substrate spectrum amino acid:sodium cotransporter that promotes absorption of the D isomers of essential amino acids. Neutral amino acids are the preferred substrates, especially methionine and phenylalanine. The protein is Sodium-dependent nutrient amino acid transporter 1 of Drosophila virilis (Fruit fly).